The following is a 209-amino-acid chain: MGTVHVIEHPLVQHKLTMMRRKDASTNSFRRLANEISALMTYEVLRDIPMQEIDVETPLEFTTGKVIDGKKLVFVSILRAGTGILDGMLTIVPGARVGHIGLYRDPKTLGAVEYYFKMPGDLQERDVVVIDPMLATGNSAVAAVERLKECGPKSIKFVCLLTCPEGVAALHKAHPDVPIYTAAVDRQLDEHGYILPGIGDAGDRLFGTK.

5-phospho-alpha-D-ribose 1-diphosphate contacts are provided by residues R79, R104, and 131-139; that span reads DPMLATGNS. Residues I194 and 199-201 each bind uracil; that span reads GDA. Residue D200 coordinates 5-phospho-alpha-D-ribose 1-diphosphate.

It belongs to the UPRTase family. The cofactor is Mg(2+).

The catalysed reaction is UMP + diphosphate = 5-phospho-alpha-D-ribose 1-diphosphate + uracil. It participates in pyrimidine metabolism; UMP biosynthesis via salvage pathway; UMP from uracil: step 1/1. Allosterically activated by GTP. Its function is as follows. Catalyzes the conversion of uracil and 5-phospho-alpha-D-ribose 1-diphosphate (PRPP) to UMP and diphosphate. In Rhodococcus jostii (strain RHA1), this protein is Uracil phosphoribosyltransferase.